The chain runs to 55 residues: Large ribosomal subunit protein bL33 (55 aa).

Belongs to the bacterial ribosomal protein bL33 family.

This Campylobacter fetus subsp. fetus (strain 82-40) protein is Large ribosomal subunit protein bL33.